We begin with the raw amino-acid sequence, 176 residues long: Urease accessory protein UreE (176 aa).

The interval 134 to 176 (EAGAYGSGGHHHHGESSQGHAHGPLAPIPVHQKIHRPSDIPSR) is disordered.

The protein belongs to the UreE family.

It localises to the cytoplasm. Involved in urease metallocenter assembly. Binds nickel. Probably functions as a nickel donor during metallocenter assembly. In Nitrosospira multiformis (strain ATCC 25196 / NCIMB 11849 / C 71), this protein is Urease accessory protein UreE.